Here is a 558-residue protein sequence, read N- to C-terminus: 2-isopropylmalate synthase (558 aa).

A Pyruvate carboxyltransferase domain is found at 30 to 303; it reads PIWCSVDLRD…DPGIDCSDIN (274 aa). Mg(2+) is bound by residues Asp-39, His-242, His-244, and Asn-278. Residues 437–558 form a regulatory domain region; sequence QPGARLKFLD…ANRIVGRKAR (122 aa).

Belongs to the alpha-IPM synthase/homocitrate synthase family. LeuA type 2 subfamily. Homodimer. Mg(2+) serves as cofactor.

It localises to the cytoplasm. It carries out the reaction 3-methyl-2-oxobutanoate + acetyl-CoA + H2O = (2S)-2-isopropylmalate + CoA + H(+). Its pathway is amino-acid biosynthesis; L-leucine biosynthesis; L-leucine from 3-methyl-2-oxobutanoate: step 1/4. In terms of biological role, catalyzes the condensation of the acetyl group of acetyl-CoA with 3-methyl-2-oxobutanoate (2-ketoisovalerate) to form 3-carboxy-3-hydroxy-4-methylpentanoate (2-isopropylmalate). The sequence is that of 2-isopropylmalate synthase from Mesorhizobium japonicum (strain LMG 29417 / CECT 9101 / MAFF 303099) (Mesorhizobium loti (strain MAFF 303099)).